A 125-amino-acid chain; its full sequence is S-adenosylmethionine decarboxylase proenzyme (125 aa).

Ser-71 (schiff-base intermediate with substrate; via pyruvic acid) is an active-site residue. Ser-71 is subject to Pyruvic acid (Ser); by autocatalysis. His-76 serves as the catalytic Proton acceptor; for processing activity. Residue Cys-91 is the Proton donor; for catalytic activity of the active site.

It belongs to the prokaryotic AdoMetDC family. Type 1 subfamily. Heterotetramer of two alpha and two beta chains arranged as a dimer of alpha/beta heterodimers. It depends on pyruvate as a cofactor. In terms of processing, is synthesized initially as an inactive proenzyme. Formation of the active enzyme involves a self-maturation process in which the active site pyruvoyl group is generated from an internal serine residue via an autocatalytic post-translational modification. Two non-identical subunits are generated from the proenzyme in this reaction, and the pyruvate is formed at the N-terminus of the alpha chain, which is derived from the carboxyl end of the proenzyme. The post-translation cleavage follows an unusual pathway, termed non-hydrolytic serinolysis, in which the side chain hydroxyl group of the serine supplies its oxygen atom to form the C-terminus of the beta chain, while the remainder of the serine residue undergoes an oxidative deamination to produce ammonia and the pyruvoyl group blocking the N-terminus of the alpha chain.

It catalyses the reaction S-adenosyl-L-methionine + H(+) = S-adenosyl 3-(methylsulfanyl)propylamine + CO2. It participates in amine and polyamine biosynthesis; S-adenosylmethioninamine biosynthesis; S-adenosylmethioninamine from S-adenosyl-L-methionine: step 1/1. Its function is as follows. Catalyzes the decarboxylation of S-adenosylmethionine to S-adenosylmethioninamine (dcAdoMet), the propylamine donor required for the synthesis of the polyamines spermine and spermidine from the diamine putrescine. The protein is S-adenosylmethionine decarboxylase proenzyme of Pyrobaculum arsenaticum (strain DSM 13514 / JCM 11321 / PZ6).